The sequence spans 176 residues: 2-C-methyl-D-erythritol 2,4-cyclodiphosphate synthase (176 aa).

The a divalent metal cation site is built by D23, H25, and H60. D23–H25 provides a ligand contact to 4-CDP-2-C-methyl-D-erythritol 2-phosphate. T149–E152 lines the 4-CDP-2-C-methyl-D-erythritol 2-phosphate pocket.

This sequence belongs to the IspF family. In terms of assembly, homotrimer. The cofactor is a divalent metal cation.

The enzyme catalyses 4-CDP-2-C-methyl-D-erythritol 2-phosphate = 2-C-methyl-D-erythritol 2,4-cyclic diphosphate + CMP. It participates in isoprenoid biosynthesis; isopentenyl diphosphate biosynthesis via DXP pathway; isopentenyl diphosphate from 1-deoxy-D-xylulose 5-phosphate: step 4/6. Its function is as follows. Involved in the biosynthesis of isopentenyl diphosphate (IPP) and dimethylallyl diphosphate (DMAPP), two major building blocks of isoprenoid compounds. Catalyzes the conversion of 4-diphosphocytidyl-2-C-methyl-D-erythritol 2-phosphate (CDP-ME2P) to 2-C-methyl-D-erythritol 2,4-cyclodiphosphate (ME-CPP) with a corresponding release of cytidine 5-monophosphate (CMP). This Chlamydia caviae (strain ATCC VR-813 / DSM 19441 / 03DC25 / GPIC) (Chlamydophila caviae) protein is 2-C-methyl-D-erythritol 2,4-cyclodiphosphate synthase.